The sequence spans 161 residues: Phosphopantetheine adenylyltransferase (161 aa).

Position 8 (Ser8) interacts with substrate. Residues Ser8–Phe9 and His16 each bind ATP. Residues Lys40, Thr72, and Arg86 each coordinate substrate. ATP is bound by residues Gly87–Arg89, Glu97, and His122–Ser128.

The protein belongs to the bacterial CoaD family. In terms of assembly, homohexamer. The cofactor is Mg(2+).

Its subcellular location is the cytoplasm. The enzyme catalyses (R)-4'-phosphopantetheine + ATP + H(+) = 3'-dephospho-CoA + diphosphate. It participates in cofactor biosynthesis; coenzyme A biosynthesis; CoA from (R)-pantothenate: step 4/5. In terms of biological role, reversibly transfers an adenylyl group from ATP to 4'-phosphopantetheine, yielding dephospho-CoA (dPCoA) and pyrophosphate. This chain is Phosphopantetheine adenylyltransferase, found in Gloeobacter violaceus (strain ATCC 29082 / PCC 7421).